We begin with the raw amino-acid sequence, 230 residues long: MQIYRRPFETKTWQYRICPAETMVKIHPDLTTSGAGEETSSPYLTTEQESFTIWMKSLVFNTNGCTVFDSKGNIIYRVDNYNSKSCREVYLMDLSGHVLFTLRRQKFGLFKTWEGYRSSSATVESTTKLEYFRVKNNVFQVPNKDSSSSYRVNAGSCRNDEQYCYKMVTRGSSLAIEDNCGKLLAEVKRKQSINGLKLGDDVLTMMVESQVDHSFIIGLVLAHSLINCIL.

Belongs to the LOR family.

In terms of biological role, might be related to the phospholipid scramblase and tubby-like superfamily of membrane tethered transcription factors. In Arabidopsis thaliana (Mouse-ear cress), this protein is Protein LURP-one-related 11.